The chain runs to 545 residues: MTILTQSTTWQALSAHSQDIPHMRELFAADPARFTKMSLSSCGLFLDYSKNRATPETLNLLFALAQEAKLDAKIKAMFAGDIINTTEKRAVLHTALRNTAEQCIIAEGQDIVPEVQQTLNKMQQFVTSVTSGQWKGYTGKAITDIVSIGIGGSFLGPKIVSQALRPYWITGLNCHFVANVDGTSISEKLKLLDPETTLFIMSSKSFGTQETLTNTLTAKAWFLAKGGSQSDVAKHFAAVTSNVVKATGFGIDANNIFPMWDWVGGRYSLWSAIGLPIALLIGMDNFRALLKGAHQMDTHFANAPLTENMPVIMGLLSLWYGNFFNAQSHVVLTYDHYLRGLPAYFQQLDMESNGKSVTLNGTHVDYSTGPVIWGGEGTNGQHAYHQLLHQGTALIPADFIMPLQSHNPIGEHHDQLASNCFGQTQALMQGRTLDEALAELSKSALSNEEKLLIAKHKVMSGNKPSNTLLMDKLTPETLGALIALYEHRTFVQGAIWDINSFDQWGVELGKTLGNDVLTRIGADQEATVLDASSNGLINLYRRGKI.

Glu351 acts as the Proton donor in catalysis. Active-site residues include His382 and Lys510.

It belongs to the GPI family.

It is found in the cytoplasm. The catalysed reaction is alpha-D-glucose 6-phosphate = beta-D-fructose 6-phosphate. It functions in the pathway carbohydrate biosynthesis; gluconeogenesis. The protein operates within carbohydrate degradation; glycolysis; D-glyceraldehyde 3-phosphate and glycerone phosphate from D-glucose: step 2/4. Its function is as follows. Catalyzes the reversible isomerization of glucose-6-phosphate to fructose-6-phosphate. The chain is Glucose-6-phosphate isomerase from Shewanella oneidensis (strain ATCC 700550 / JCM 31522 / CIP 106686 / LMG 19005 / NCIMB 14063 / MR-1).